A 107-amino-acid chain; its full sequence is U1-lycotoxin-Ls1b (107 aa).

The first 20 residues, Met-1–Ser-20, serve as a signal peptide directing secretion. Residues Glu-21–Arg-41 constitute a propeptide that is removed on maturation. Intrachain disulfides connect Cys-44–Cys-59, Cys-51–Cys-68, Cys-58–Cys-86, and Cys-70–Cys-84.

It belongs to the neurotoxin 19 (CSTX) family. 04 (U1-Lctx) subfamily. In terms of tissue distribution, expressed by the venom gland.

It is found in the secreted. The polypeptide is U1-lycotoxin-Ls1b (Lycosa singoriensis (Wolf spider)).